Reading from the N-terminus, the 314-residue chain is Homoserine kinase (314 aa).

96–106 provides a ligand contact to ATP; sequence PIGSGLGSSAC.

The protein belongs to the GHMP kinase family. Homoserine kinase subfamily.

It localises to the cytoplasm. It catalyses the reaction L-homoserine + ATP = O-phospho-L-homoserine + ADP + H(+). Its pathway is amino-acid biosynthesis; L-threonine biosynthesis; L-threonine from L-aspartate: step 4/5. In terms of biological role, catalyzes the ATP-dependent phosphorylation of L-homoserine to L-homoserine phosphate. The polypeptide is Homoserine kinase (Mannheimia succiniciproducens (strain KCTC 0769BP / MBEL55E)).